The primary structure comprises 193 residues: MDGGTLPRSAPPAPPVPVGCAARRRPASPELLRCSRRRRPATAETGGGAAAVARRNERERNRVKLVNLGFQALRQHVPHGGASKKLSKVETLRSAVEYIRALQRLLAEHDAVRNALAGGLRPQAVRPSAPRGPPGTTPVAASPSRASSSPGRGGSSEPGSPRSAYSSDDSGCEGALSPAERELLDFSSWLGGY.

Disordered stretches follow at residues 1-27 (MDGG…RRPA), 37-56 (RRRP…ARRN), and 118-177 (GGLR…GALS). One can recognise a bHLH domain in the interval 50–102 (AAVARRNERERNRVKLVNLGFQALRQHVPHGGASKKLSKVETLRSAVEYIRAL). The span at 140 to 150 (AASPSRASSSP) shows a compositional bias: low complexity.

As to quaternary structure, efficient DNA binding requires dimerization with another basic helix-loop-helix (bHLH) protein. Forms heterodimers with bHLH transcription factor TCF3. May not heterodimerise with bHLH protein HAND1. Expressed in the placenta at a stage between the first and second trimesters and when it matures, at about 32-36 weeks. Expressed in the extravillous trophoblasts, the intermediate trophoblasts, and at lower levels in the cytotrophoblasts and stroma of chorionic villi of the developing placenta. Expressed in follicular T-helper (Tfh) cells.

Its subcellular location is the nucleus. Transcription factor. Binds to E-box motifs 5'-CANNTG-3' in the regulatory elements of target genes, probably as a heterodimer with another basic helix-loop-helix (bHLH) protein such as the transcription factor TCF3. May bind both open and closed chromatin, acting as a pioneer transcription factor to allow other factors to bind and activate lineage-specific genes. Required during post-implantation development for the generation of some differentiated trophoblast cell types. Transcriptional activity of ASCL2 may be antagonised in a subset of trophoblast cells by bHLH transcription factor HAND1, perhaps by competing for dimerization with other bHLH proteins. Involved in differentiation and function of follicular T-helper (Tfh) cells, thereby playing a role in germinal center responses; probably modulates expression of genes involved in Tfh cell function, such as BCL6. May also act as a suppressor of Th1-, Th2- and Th17-cell differentiation. Induces the formation of stem cells in intestinal crypts in vitro, synergistically activating transcription of target genes, such as SOX9, together with TCF4/beta-catenin. May form a bistable transcriptional switch, controlling expression of its own gene together with Wnt/R-spondin signaling, and thereby maintaining stem cell characteristics. Modulates expression of target genes, including perhaps down-regulating EGR1/Krox24 and chemokine CXCL10/Mob-1 and up-regulating CXCR4 and CDKN1C/p57kip2, in Schwann cells. May play a role in reducing proliferation of Schwann cells, perhaps acting via modulation of expression of CDKN1C. May be dispensable for blastocyst formation and later embryonic function. May be involved in the determination of neuronal precursors. In Homo sapiens (Human), this protein is Achaete-scute homolog 2 (ASCL2).